A 428-amino-acid polypeptide reads, in one-letter code: C4-dicarboxylate transport protein (428 aa).

The next 8 helical transmembrane spans lie at 8–28 (VLYV…HLYP), 44–64 (LIKM…IAGM), 78–98 (LLYF…ATHI), 148–168 (GEIL…AHLG), 184–204 (VLFG…FGAM), 222–242 (LIGT…GAIA), 307–327 (IYMT…LTWM), and 355–375 (AATL…ILGI).

It belongs to the dicarboxylate/amino acid:cation symporter (DAACS) (TC 2.A.23) family.

The protein localises to the cell inner membrane. In terms of biological role, responsible for the transport of dicarboxylates such as succinate, fumarate, and malate from the periplasm across the membrane. In Burkholderia thailandensis (strain ATCC 700388 / DSM 13276 / CCUG 48851 / CIP 106301 / E264), this protein is C4-dicarboxylate transport protein.